The primary structure comprises 447 residues: Eukaryotic translation initiation factor 3 subunit E (447 aa).

The PCI domain maps to 253 to 421; sequence LELFFNAGYI…GTVVMNHPPS (169 aa).

Belongs to the eIF-3 subunit E family. Component of the eukaryotic translation initiation factor 3 (eIF-3) complex.

The protein resides in the cytoplasm. Its function is as follows. Component of the eukaryotic translation initiation factor 3 (eIF-3) complex, which is involved in protein synthesis of a specialized repertoire of mRNAs and, together with other initiation factors, stimulates binding of mRNA and methionyl-tRNAi to the 40S ribosome. The eIF-3 complex specifically targets and initiates translation of a subset of mRNAs involved in cell proliferation. The chain is Eukaryotic translation initiation factor 3 subunit E from Chaetomium globosum (strain ATCC 6205 / CBS 148.51 / DSM 1962 / NBRC 6347 / NRRL 1970) (Soil fungus).